Reading from the N-terminus, the 624-residue chain is Probable potassium transport system protein Kup (624 aa).

12 helical membrane passes run 13 to 33 (LALGALGVVFGDIGTSPLYTM), 52 to 72 (ILSLIFWALILVVSLKYVLVI), 102 to 122 (WIIMSLGFLGASLFFGDSLIT), 139 to 159 (PALHPFILPLALGILVGLFAI), 170 to 190 (LFGPIMLLWFAVLGVLGAIGI), 208 to 228 (FFMTHGTAGFLILGAVVLAIT), 249 to 269 (WFGFVLPALVVNYFGQGALLL), 291 to 311 (MVALATAATVIASQAVISGAF), 339 to 359 (IYIPFVNWTLAAGVALLVLGF), 368 to 388 (AYGIAVTATFAIDTVLLALLM), 399 to 419 (TLVAAALFLTLDLAFFGANAV), and 421 to 441 (IPEGGWFPLVVAVVVFTILVT).

The protein belongs to the HAK/KUP transporter (TC 2.A.72) family.

The protein resides in the cell inner membrane. The catalysed reaction is K(+)(in) + H(+)(in) = K(+)(out) + H(+)(out). Its function is as follows. Transport of potassium into the cell. Likely operates as a K(+):H(+) symporter. This chain is Probable potassium transport system protein Kup, found in Thiobacillus denitrificans (strain ATCC 25259 / T1).